A 216-amino-acid chain; its full sequence is Guanylate kinase (216 aa).

Residues 15 to 193 (GNLFMVVAPS…ALKQLQNVVH (179 aa)) form the Guanylate kinase-like domain. Residue 22-29 (APSGAGKS) participates in ATP binding.

This sequence belongs to the guanylate kinase family.

It is found in the cytoplasm. It catalyses the reaction GMP + ATP = GDP + ADP. Its function is as follows. Essential for recycling GMP and indirectly, cGMP. The sequence is that of Guanylate kinase from Cupriavidus metallidurans (strain ATCC 43123 / DSM 2839 / NBRC 102507 / CH34) (Ralstonia metallidurans).